An 88-amino-acid polypeptide reads, in one-letter code: EMBRYO SURROUNDING FACTOR 1-like protein 7 (88 aa).

The signal sequence occupies residues 1 to 22 (MKSSHIALICIVMFSLFALHES). Disulfide bonds link cysteine 41-cysteine 57, cysteine 46-cysteine 85, cysteine 55-cysteine 81, and cysteine 58-cysteine 68.

This sequence belongs to the MEG family. As to expression, expressed in leaves and flowers.

The sequence is that of EMBRYO SURROUNDING FACTOR 1-like protein 7 (ESFL7) from Arabidopsis thaliana (Mouse-ear cress).